The following is a 473-amino-acid chain: Lactate utilization protein B 2 (473 aa).

4Fe-4S ferredoxin-type domains are found at residues 302–332 and 351–380; these read GSEF…GHSY and YDDY…LHDL. [4Fe-4S] cluster contacts are provided by Cys311, Cys314, Cys317, Cys321, Cys364, Cys367, and Cys371.

It belongs to the LutB/YkgF family.

Its function is as follows. Is involved in L-lactate degradation and allows cells to grow with lactate as the sole carbon source. Has probably a role as an electron transporter during oxidation of L-lactate. In Bacillus mycoides (strain KBAB4) (Bacillus weihenstephanensis), this protein is Lactate utilization protein B 2.